The chain runs to 279 residues: NAD kinase (279 aa).

Catalysis depends on Asp63, which acts as the Proton acceptor. Residues 63-64 (DG), Arg68, 133-134 (NE), and Asp163 each bind NAD(+).

It belongs to the NAD kinase family. A divalent metal cation is required as a cofactor.

It localises to the cytoplasm. The catalysed reaction is NAD(+) + ATP = ADP + NADP(+) + H(+). Functionally, involved in the regulation of the intracellular balance of NAD and NADP, and is a key enzyme in the biosynthesis of NADP. Catalyzes specifically the phosphorylation on 2'-hydroxyl of the adenosine moiety of NAD to yield NADP. In Protochlamydia amoebophila (strain UWE25), this protein is NAD kinase.